The primary structure comprises 164 residues: Large ribosomal subunit protein uL10 (164 aa).

It belongs to the universal ribosomal protein uL10 family. Part of the ribosomal stalk of the 50S ribosomal subunit. The N-terminus interacts with L11 and the large rRNA to form the base of the stalk. The C-terminus forms an elongated spine to which L12 dimers bind in a sequential fashion forming a multimeric L10(L12)X complex.

Its function is as follows. Forms part of the ribosomal stalk, playing a central role in the interaction of the ribosome with GTP-bound translation factors. In Helicobacter pylori (strain P12), this protein is Large ribosomal subunit protein uL10.